The sequence spans 259 residues: ATP synthase subunit a (259 aa).

Positions 1 to 10 (MFNLLNTYIT) are cleaved as a propeptide — removed in mature form. The next 6 helical transmembrane spans lie at 36–56 (LTTF…LYTL), 92–112 (WGLY…ANLI), 125–145 (LVFI…LGLY), 150–170 (VFFS…LLVI), 191–211 (ILAG…FMLI), and 216–236 (LVFG…EFAI).

It belongs to the ATPase A chain family. In terms of assembly, F-type ATPases have 2 components, CF(1) - the catalytic core - and CF(0) - the membrane proton channel. In yeast, the dimeric form of ATP synthase consists of 17 polypeptides: alpha, beta, gamma, delta, epsilon, 4 (B), 5 (OSCP), 6 (A), 8, 9 (C), d, E (Tim11), f, g, h, i/j and k.

It localises to the mitochondrion inner membrane. Its function is as follows. Mitochondrial membrane ATP synthase (F(1)F(0) ATP synthase or Complex V) produces ATP from ADP in the presence of a proton gradient across the membrane which is generated by electron transport complexes of the respiratory chain. F-type ATPases consist of two structural domains, F(1) - containing the extramembraneous catalytic core and F(0) - containing the membrane proton channel, linked together by a central stalk and a peripheral stalk. During catalysis, ATP synthesis in the catalytic domain of F(1) is coupled via a rotary mechanism of the central stalk subunits to proton translocation. Key component of the proton channel; it may play a direct role in the translocation of protons across the membrane. In Saccharomyces cerevisiae (strain ATCC 204508 / S288c) (Baker's yeast), this protein is ATP synthase subunit a (ATP6).